Consider the following 212-residue polypeptide: Ribosomal RNA small subunit methyltransferase G (212 aa).

Residues G80, L85, A131–E132, and R146 each bind S-adenosyl-L-methionine.

The protein belongs to the methyltransferase superfamily. RNA methyltransferase RsmG family.

It is found in the cytoplasm. The enzyme catalyses guanosine(527) in 16S rRNA + S-adenosyl-L-methionine = N(7)-methylguanosine(527) in 16S rRNA + S-adenosyl-L-homocysteine. In terms of biological role, specifically methylates the N7 position of guanine in position 527 of 16S rRNA. The chain is Ribosomal RNA small subunit methyltransferase G from Xanthomonas oryzae pv. oryzae (strain KACC10331 / KXO85).